The chain runs to 133 residues: Ribosome-binding factor A (133 aa).

Belongs to the RbfA family. Monomer. Binds 30S ribosomal subunits, but not 50S ribosomal subunits or 70S ribosomes.

The protein resides in the cytoplasm. Its function is as follows. One of several proteins that assist in the late maturation steps of the functional core of the 30S ribosomal subunit. Associates with free 30S ribosomal subunits (but not with 30S subunits that are part of 70S ribosomes or polysomes). Required for efficient processing of 16S rRNA. May interact with the 5'-terminal helix region of 16S rRNA. The polypeptide is Ribosome-binding factor A (Chelativorans sp. (strain BNC1)).